A 180-amino-acid polypeptide reads, in one-letter code: Large ribosomal subunit protein uL5 (180 aa).

Belongs to the universal ribosomal protein uL5 family. As to quaternary structure, part of the 50S ribosomal subunit; part of the 5S rRNA/L5/L18/L25 subcomplex. Contacts the 5S rRNA and the P site tRNA. Forms a bridge to the 30S subunit in the 70S ribosome.

In terms of biological role, this is one of the proteins that bind and probably mediate the attachment of the 5S RNA into the large ribosomal subunit, where it forms part of the central protuberance. In the 70S ribosome it contacts protein S13 of the 30S subunit (bridge B1b), connecting the 2 subunits; this bridge is implicated in subunit movement. Contacts the P site tRNA; the 5S rRNA and some of its associated proteins might help stabilize positioning of ribosome-bound tRNAs. The sequence is that of Large ribosomal subunit protein uL5 from Ruminiclostridium cellulolyticum (strain ATCC 35319 / DSM 5812 / JCM 6584 / H10) (Clostridium cellulolyticum).